The following is a 433-amino-acid chain: Ribosomal protein uS12 methylthiotransferase RimO (433 aa).

Residues 6–122 (QSIFLLSLGC…IISVLGGSYR (117 aa)) form the MTTase N-terminal domain. Residues cysteine 15, cysteine 51, cysteine 85, cysteine 146, cysteine 150, and cysteine 153 each contribute to the [4Fe-4S] cluster site. Positions 132 to 362 (LTPPHYAWLK…MELQESIAAE (231 aa)) constitute a Radical SAM core domain. The TRAM domain occupies 365–432 (RELEGRVMKV…AYELHGRVND (68 aa)).

The protein belongs to the methylthiotransferase family. RimO subfamily. The cofactor is [4Fe-4S] cluster.

The protein resides in the cytoplasm. It carries out the reaction L-aspartate(89)-[ribosomal protein uS12]-hydrogen + (sulfur carrier)-SH + AH2 + 2 S-adenosyl-L-methionine = 3-methylsulfanyl-L-aspartate(89)-[ribosomal protein uS12]-hydrogen + (sulfur carrier)-H + 5'-deoxyadenosine + L-methionine + A + S-adenosyl-L-homocysteine + 2 H(+). In terms of biological role, catalyzes the methylthiolation of an aspartic acid residue of ribosomal protein uS12. This is Ribosomal protein uS12 methylthiotransferase RimO from Prosthecochloris aestuarii (strain DSM 271 / SK 413).